Consider the following 157-residue polypeptide: Ribosome maturation factor RimP (157 aa).

The protein belongs to the RimP family.

It is found in the cytoplasm. In terms of biological role, required for maturation of 30S ribosomal subunits. The protein is Ribosome maturation factor RimP of Lactococcus lactis subsp. lactis (strain IL1403) (Streptococcus lactis).